An 87-amino-acid polypeptide reads, in one-letter code: Scorpine-like peptide Tco 41.46-2 (87 aa).

The N-terminal stretch at 1 to 19 (MERKLALLLFLGMVTLASC) is a signal peptide. One can recognise a BetaSPN-type CS-alpha/beta domain in the interval 53-87 (QFGCPAYEGYCNNHCQDIERKDGECHGFKCKCAKD). Disulfide bonds link Cys-56–Cys-77, Cys-63–Cys-82, and Cys-67–Cys-84.

Belongs to the long chain scorpion toxin family. Class 1 subfamily. In terms of tissue distribution, expressed by the venom gland.

It localises to the secreted. May have antibacterial activity. Its function is as follows. Inhibits voltage-gated potassium channel. Functionally, does not induce hemolytic activity, lactate dehydrogenase (LDH) release from mast cells, mast cell degranulation, and antimicrobial effects. In vivo, injection into mice causes moderate edema formation, but induces very weak or no change in nociceptive sensibility. It also reduces mice locomotion, suggesting an increase in anxiety, but causes no alteration in rearing (standing on hind limbs). The sequence is that of Scorpine-like peptide Tco 41.46-2 from Tityus costatus (Brazilian scorpion).